The sequence spans 358 residues: Methylthioribose-1-phosphate isomerase (358 aa).

Substrate-binding positions include 54-56 (RGA), arginine 96, and glutamine 205. Aspartate 246 (proton donor) is an active-site residue. 256–257 (NK) contributes to the substrate binding site.

It belongs to the eIF-2B alpha/beta/delta subunits family. MtnA subfamily.

It carries out the reaction 5-(methylsulfanyl)-alpha-D-ribose 1-phosphate = 5-(methylsulfanyl)-D-ribulose 1-phosphate. It participates in amino-acid biosynthesis; L-methionine biosynthesis via salvage pathway; L-methionine from S-methyl-5-thio-alpha-D-ribose 1-phosphate: step 1/6. Catalyzes the interconversion of methylthioribose-1-phosphate (MTR-1-P) into methylthioribulose-1-phosphate (MTRu-1-P). The sequence is that of Methylthioribose-1-phosphate isomerase from Pseudomonas fluorescens (strain Pf0-1).